The sequence spans 338 residues: D-erythrose-4-phosphate dehydrogenase (338 aa).

An NAD(+)-binding site is contributed by 11 to 12 (RI). Substrate-binding positions include 153 to 155 (SCT), arginine 199, 212 to 213 (TK), and arginine 235. The active-site Nucleophile is cysteine 154. NAD(+) is bound at residue asparagine 317.

The protein belongs to the glyceraldehyde-3-phosphate dehydrogenase family. Epd subfamily. As to quaternary structure, homotetramer.

Its subcellular location is the cytoplasm. The catalysed reaction is D-erythrose 4-phosphate + NAD(+) + H2O = 4-phospho-D-erythronate + NADH + 2 H(+). The protein operates within cofactor biosynthesis; pyridoxine 5'-phosphate biosynthesis; pyridoxine 5'-phosphate from D-erythrose 4-phosphate: step 1/5. Its function is as follows. Catalyzes the NAD-dependent conversion of D-erythrose 4-phosphate to 4-phosphoerythronate. The sequence is that of D-erythrose-4-phosphate dehydrogenase from Shewanella loihica (strain ATCC BAA-1088 / PV-4).